The chain runs to 389 residues: Urotensin-2 receptor (389 aa).

Polar residues-rich tracts occupy residues 1 to 10 (MALTPESPSS) and 28 to 39 (PNATLNSSWASP). The segment at 1–39 (MALTPESPSSFPGLAAIGSSVPEPPGSPNATLNSSWASP) is disordered. Residues 1 to 54 (MALTPESPSSFPGLAAIGSSVPEPPGSPNATLNSSWASPTEPSSLEDLVATGAI) are Extracellular-facing. Residues N29 and N33 are each glycosylated (N-linked (GlcNAc...) asparagine). A helical transmembrane segment spans residues 55–77 (GTLLSAMGVVGVVGNAYTLVVTC). The Cytoplasmic segment spans residues 78–87 (RSLRAVASMY). The chain crosses the membrane as a helical span at residues 88–113 (IYVVNLALADLLYLLSIPFIVATYIT). At 114 to 124 (KEWHFGDVGCR) the chain is on the extracellular side. The cysteines at positions 123 and 199 are disulfide-linked. A helical membrane pass occupies residues 125 to 146 (VLFSLDFLTMHASIFTLTVMSS). At 147–167 (ERYAAVLRPLDTVQRPKGYRK) the chain is on the cytoplasmic side. The chain crosses the membrane as a helical span at residues 168–186 (LLALGTWLLALLLTLPVML). Residues 187-209 (AMRLVRRGPKSLCLPAWGPRAHR) are Extracellular-facing. The chain crosses the membrane as a helical span at residues 210 to 232 (AYLTLLFATSIAGPGLLIGLLYA). At 233-258 (RLARAYRRSQRASFKRARRPGARALR) the chain is on the cytoplasmic side. The helical transmembrane segment at 259–284 (LVLGIVLLFWACFLPFWLWQLLAQYR) threads the bilayer. The Extracellular portion of the chain corresponds to 285–297 (EAPLAPRTARIVN). The helical transmembrane segment at 298-318 (YLTTCLTYGNSCANPFLYTLL) threads the bilayer. Over 319–389 (TRNYRDHLRG…PALESPGDPA (71 aa)) the chain is Cytoplasmic. The disordered stretch occupies residues 328–366 (GRVRSPGSGGVRGPVPSLQPRARFQRGSGRSLSSCSPQP). The segment covering 355-366 (SGRSLSSCSPQP) has biased composition (polar residues).

This sequence belongs to the G-protein coupled receptor 1 family.

Its subcellular location is the cell membrane. In terms of biological role, high affinity receptor for urotensin-2 and urotensin-2B. The activity of this receptor is mediated by a G-protein that activate a phosphatidylinositol-calcium second messenger system. This Macaca mulatta (Rhesus macaque) protein is Urotensin-2 receptor (UTS2R).